The following is a 663-amino-acid chain: Zinc finger protein 44 (663 aa).

A KRAB domain is found at 52-138; that stretch reads VAFEDVAVNF…GETLSQIRNS (87 aa). The C2H2-type 1; atypical zinc finger occupies 189-211; the sequence is YTHKQCGKGLSYRHSFQTCERPH. The segment at 217–239 adopts a C2H2-type 2; degenerate zinc-finger fold; the sequence is YDCKECGKTFSSPGNLRRHMVVK. 15 C2H2-type zinc fingers span residues 245–267, 273–295, 301–323, 329–351, 357–379, 385–407, 413–435, 441–463, 469–491, 497–518, 524–546, 552–574, 580–602, 608–630, and 636–658; these read YKCELCGKAFFWPSLLRMHERTH, YECKQCSKAFPVYSSYLRHEKIH, YECKQCSKAFPDYSSYLRHERTH, YKCKQCGKAFSVSGSLRVHERIH, YTCKQCGKAFCHLGSFQRHMIMH, HKCKICGKGFDFPGSARIHEGTH, YECKQCGKLLSHRSSFRRHMMAH, HKCTVCGKAFDSPSVFQRHERTH, YECKQCGKAFRTSSSLRKHETTH, YKCKCGKAFSDLFSFQSHETTH, YECKECGKAFSSFKYFCRHERTH, YECQICGKAFSRFSYLKTHERTH, YECKQCRKAFFWPSFLLRHERTH, YECKHCGKAFSRSSFCREHERTH, and YECKECGKAFSSLSSFNRHKRTH.

It belongs to the krueppel C2H2-type zinc-finger protein family.

It is found in the nucleus. Its function is as follows. May be involved in transcriptional regulation. This is Zinc finger protein 44 (ZNF44) from Homo sapiens (Human).